A 401-amino-acid polypeptide reads, in one-letter code: Phosphoglycerate kinase (401 aa).

Substrate-binding positions include D20–N22, R35, H58–R61, R117, and R154. ATP is bound by residues K204, G298, E329, and G358 to S361.

This sequence belongs to the phosphoglycerate kinase family. As to quaternary structure, monomer.

It localises to the cytoplasm. It carries out the reaction (2R)-3-phosphoglycerate + ATP = (2R)-3-phospho-glyceroyl phosphate + ADP. Its pathway is carbohydrate degradation; glycolysis; pyruvate from D-glyceraldehyde 3-phosphate: step 2/5. In Bifidobacterium longum (strain DJO10A), this protein is Phosphoglycerate kinase.